Here is a 211-residue protein sequence, read N- to C-terminus: Protein-methionine-sulfoxide reductase heme-binding subunit MsrQ (211 aa).

The next 5 membrane-spanning stretches (helical) occupy residues 45-65, 82-102, 116-136, 153-173, and 178-198; these read HFTGLTALKFLLAALLITPLA, LWCFAWATLHLTSYALLELGV, PYLTLGIISWVILLALAFTST, FVYLVAILAPIHYLWSVKIIS, and IYAGLAVLLLALRYKKLLSLF.

The protein belongs to the MsrQ family. Heterodimer of a catalytic subunit (MsrP) and a heme-binding subunit (MsrQ). Requires FMN as cofactor. It depends on heme b as a cofactor.

It is found in the cell inner membrane. Its function is as follows. Part of the MsrPQ system that repairs oxidized periplasmic proteins containing methionine sulfoxide residues (Met-O), using respiratory chain electrons. Thus protects these proteins from oxidative-stress damage caused by reactive species of oxygen and chlorine generated by the host defense mechanisms. MsrPQ is essential for the maintenance of envelope integrity under bleach stress, rescuing a wide series of structurally unrelated periplasmic proteins from methionine oxidation, including the primary periplasmic chaperone SurA and the lipoprotein Pal. MsrQ provides electrons for reduction to the reductase catalytic subunit MsrP, using the quinone pool of the respiratory chain. In Escherichia coli O127:H6 (strain E2348/69 / EPEC), this protein is Protein-methionine-sulfoxide reductase heme-binding subunit MsrQ.